We begin with the raw amino-acid sequence, 154 residues long: Transcription antitermination protein NusB (154 aa).

This sequence belongs to the NusB family.

Involved in transcription antitermination. Required for transcription of ribosomal RNA (rRNA) genes. Binds specifically to the boxA antiterminator sequence of the ribosomal RNA (rrn) operons. The protein is Transcription antitermination protein NusB of Hyphomonas neptunium (strain ATCC 15444).